The chain runs to 201 residues: Recombination protein RecR (201 aa).

The segment at 58-73 (CEQCASITDTCPCRIC) adopts a C4-type zinc-finger fold. Positions 81–178 (DKLCLVSEWD…ELSRLAQGIP (98 aa)) constitute a Toprim domain.

It belongs to the RecR family.

Its function is as follows. May play a role in DNA repair. It seems to be involved in an RecBC-independent recombinational process of DNA repair. It may act with RecF and RecO. This Maridesulfovibrio salexigens (strain ATCC 14822 / DSM 2638 / NCIMB 8403 / VKM B-1763) (Desulfovibrio salexigens) protein is Recombination protein RecR.